Reading from the N-terminus, the 62-residue chain is MAHRITDECTYCAACEPECPVSAISAGDSIYVIDENVCVDCIGYHDEPACVAVCPVDCIIKV.

4Fe-4S ferredoxin-type domains follow at residues 2 to 28 and 29 to 62; these read AHRI…SAGD and SIYV…IIKV. Cys-9, Cys-12, Cys-15, Cys-19, Cys-38, Cys-41, Cys-50, and Cys-54 together coordinate [4Fe-4S] cluster.

It depends on [4Fe-4S] cluster as a cofactor.

Functionally, ferredoxins are iron-sulfur proteins that transfer electrons in a wide variety of metabolic reactions. The protein is Ferredoxin-2 of Chlorobaculum tepidum (strain ATCC 49652 / DSM 12025 / NBRC 103806 / TLS) (Chlorobium tepidum).